The chain runs to 194 residues: A-type ATP synthase subunit E (194 aa).

A disordered region spans residues 35-56 (DAEADADQIREEREAEVERTIE). The span at 41-56 (DQIREEREAEVERTIE) shows a compositional bias: basic and acidic residues.

The protein belongs to the V-ATPase E subunit family. As to quaternary structure, has multiple subunits with at least A(3), B(3), C, D, E, F, H, I and proteolipid K(x).

It localises to the cell membrane. Its function is as follows. Component of the A-type ATP synthase that produces ATP from ADP in the presence of a proton gradient across the membrane. The sequence is that of A-type ATP synthase subunit E from Haloarcula marismortui (strain ATCC 43049 / DSM 3752 / JCM 8966 / VKM B-1809) (Halobacterium marismortui).